Here is a 564-residue protein sequence, read N- to C-terminus: Rho guanine nucleotide exchange factor 9 (564 aa).

The SH3 domain occupies 8–67 (DSIVSAEAVWDHATMANRELAFKAGDVIKVLDASNKDWWWGQIDDEEGWFPASFVRLWVN). The tract at residues 100-110 (RDQMRANVINE) is interaction with GPHN. The DH domain maps to 103 to 287 (MRANVINEIM…RNVTQQINER (185 aa)). One can recognise a PH domain in the interval 318 to 425 (ELIYTGEMAW…WLRAFREERK (108 aa)). The interval 451–470 (KVPKQKGVNSARSVPPSYPP) is disordered. Serine 502 carries the post-translational modification Phosphoserine.

In terms of assembly, interacts with GPHN.

It localises to the cytoplasm. The protein resides in the postsynaptic density. Acts as a guanine nucleotide exchange factor (GEF) for CDC42. Promotes formation of GPHN clusters. This Pongo abelii (Sumatran orangutan) protein is Rho guanine nucleotide exchange factor 9 (ARHGEF9).